A 254-amino-acid chain; its full sequence is 3-deoxy-manno-octulosonate cytidylyltransferase (254 aa).

The protein belongs to the KdsB family.

It is found in the cytoplasm. It carries out the reaction 3-deoxy-alpha-D-manno-oct-2-ulosonate + CTP = CMP-3-deoxy-beta-D-manno-octulosonate + diphosphate. Its pathway is nucleotide-sugar biosynthesis; CMP-3-deoxy-D-manno-octulosonate biosynthesis; CMP-3-deoxy-D-manno-octulosonate from 3-deoxy-D-manno-octulosonate and CTP: step 1/1. The protein operates within bacterial outer membrane biogenesis; lipopolysaccharide biosynthesis. Functionally, activates KDO (a required 8-carbon sugar) for incorporation into bacterial lipopolysaccharide in Gram-negative bacteria. This is 3-deoxy-manno-octulosonate cytidylyltransferase from Pseudomonas fluorescens (strain ATCC BAA-477 / NRRL B-23932 / Pf-5).